The sequence spans 293 residues: Ribonuclease H2 subunit B (293 aa).

Residues 251-278 (KRPQNSDITSSLLKKPNRKQATKKSKYF) form a disordered region. The segment covering 265–276 (KPNRKQATKKSK) has biased composition (basic residues).

The protein belongs to the RNase H2 subunit B family. Component of the RNase H2 complex.

It is found in the nucleus. The protein localises to the cytoplasm. In terms of biological role, non catalytic subunit of RNase H2, an endonuclease that specifically degrades the RNA of RNA:DNA hybrids. Participates in DNA replication, possibly by mediating the removal of lagging-strand Okazaki fragment RNA primers during DNA replication. Mediates the excision of single ribonucleotides from DNA:RNA duplexes. The chain is Ribonuclease H2 subunit B (rnh202) from Schizosaccharomyces pombe (strain 972 / ATCC 24843) (Fission yeast).